Here is a 418-residue protein sequence, read N- to C-terminus: PP2A regulatory subunit TAP46 (418 aa).

The segment at 367-418 (KMIQESNSAWHKDGSRSAQEDEDAEEEKARAWDDWKDDNPRGAGNKKLTPCG) is disordered. 2 stretches are compositionally biased toward basic and acidic residues: residues 376–385 (WHKDGSRSAQ) and 393–406 (EKAR…DDNP).

The protein belongs to the IGBP1/TAP42 family.

Its function is as follows. Involved in the regulation of the TOR signaling pathway. Seems to act as a regulator of PP2A catalytic activity. This chain is PP2A regulatory subunit TAP46, found in Oryza sativa subsp. japonica (Rice).